A 362-amino-acid polypeptide reads, in one-letter code: Probable dual-specificity RNA methyltransferase RlmN (362 aa).

The Proton acceptor role is filled by E99. A Radical SAM core domain is found at 105 to 341 (SPDRHTVCVS…VTVRKSQGAS (237 aa)). A disulfide bond links C112 and C346. [4Fe-4S] cluster is bound by residues C119, C123, and C126. S-adenosyl-L-methionine-binding positions include 171 to 172 (GE), S204, 227 to 229 (SLH), and N303. C346 serves as the catalytic S-methylcysteine intermediate.

This sequence belongs to the radical SAM superfamily. RlmN family. [4Fe-4S] cluster serves as cofactor.

Its subcellular location is the cytoplasm. It carries out the reaction adenosine(2503) in 23S rRNA + 2 reduced [2Fe-2S]-[ferredoxin] + 2 S-adenosyl-L-methionine = 2-methyladenosine(2503) in 23S rRNA + 5'-deoxyadenosine + L-methionine + 2 oxidized [2Fe-2S]-[ferredoxin] + S-adenosyl-L-homocysteine. The enzyme catalyses adenosine(37) in tRNA + 2 reduced [2Fe-2S]-[ferredoxin] + 2 S-adenosyl-L-methionine = 2-methyladenosine(37) in tRNA + 5'-deoxyadenosine + L-methionine + 2 oxidized [2Fe-2S]-[ferredoxin] + S-adenosyl-L-homocysteine. Functionally, specifically methylates position 2 of adenine 2503 in 23S rRNA and position 2 of adenine 37 in tRNAs. This Chlorobium phaeobacteroides (strain BS1) protein is Probable dual-specificity RNA methyltransferase RlmN.